Here is a 461-residue protein sequence, read N- to C-terminus: Cysteine--tRNA ligase (461 aa).

Residue Cys-30 participates in Zn(2+) binding. The short motif at Val-32–His-42 is the 'HIGH' region element. Residues Cys-211, His-236, and Glu-240 each contribute to the Zn(2+) site. A 'KMSKS' region motif is present at residues Lys-268–Ser-272. An ATP-binding site is contributed by Lys-271.

This sequence belongs to the class-I aminoacyl-tRNA synthetase family. In terms of assembly, monomer. Zn(2+) serves as cofactor.

It localises to the cytoplasm. The catalysed reaction is tRNA(Cys) + L-cysteine + ATP = L-cysteinyl-tRNA(Cys) + AMP + diphosphate. This chain is Cysteine--tRNA ligase, found in Shewanella sp. (strain MR-4).